The primary structure comprises 727 residues: Centrosomal protein kizuna (727 aa).

Residues 1–20 are disordered; the sequence is MTERSGRGGGTRGASALPSP. Residues 77–124 adopt a coiled-coil conformation; the sequence is KNARIRNQEYLKQFERIQANITASLEKLQELKIEFETQIKKMQLLSKD. Disordered stretches follow at residues 176–226, 271–456, and 564–727; these read DFTT…NKSD, EGKK…FTNL, and RLAV…PRTP. The segment covering 198–223 has biased composition (polar residues); it reads HQQTAQSSDVTGSRVVQTPGDTQCLN. Residues 286–324 show a composition bias toward basic and acidic residues; it reads LSPENRTTDLKCDSSRRSEGSEGEILTREHIEVEEERAR. Serine 328 carries the phosphoserine modification. Residues 343 to 359 show a composition bias toward basic and acidic residues; sequence PQEKPPARKASSDHLPC. Residues 380-390 show a composition bias toward low complexity; it reads LSSSSDLTVSV. Position 387 is a phosphothreonine; by PLK1 (threonine 387). Residues 442 to 455 are compositionally biased toward polar residues; sequence APSTPDSPNESFTN. A compositionally biased stretch (low complexity) spans 569–583; the sequence is SSKSSCSLPSTPSDE. Positions 603 to 613 are enriched in acidic residues; it reads QEDESREESTE. Positions 631-642 are enriched in polar residues; the sequence is LKQSALQGSTHQ. Composition is skewed to low complexity over residues 659–669 and 677–689; these read GLKTGSGTFKT and SEAS…GSPL. Phosphoserine occurs at positions 711, 714, and 716.

The protein belongs to the kizuna family. In terms of assembly, interacts with AKAP9, CEP72, ODF2, PCNT and TUBGCP2. Post-translationally, phosphorylation at Thr-387 by PLK1 is not needed for centrosomal localization or pericentriolar material expansion but is indispensable for spindle-pole stabilization.

The protein resides in the cytoplasm. Its subcellular location is the cytoskeleton. The protein localises to the microtubule organizing center. It localises to the centrosome. It is found in the cilium basal body. Functionally, centrosomal protein required for establishing a robust mitotic centrosome architecture that can endure the forces that converge on the centrosomes during spindle formation. Required for stabilizing the expanded pericentriolar material around the centriole. This chain is Centrosomal protein kizuna (KIZ), found in Bos taurus (Bovine).